A 504-amino-acid polypeptide reads, in one-letter code: Anaerobic nitric oxide reductase transcription regulator NorR (504 aa).

Residue Asp57 is modified to 4-aspartylphosphate. Residues 187-416 enclose the Sigma-54 factor interaction domain; the sequence is MIGLSPGMMQ…LEHAIHRAVV (230 aa). Residues 215–222 and 278–287 contribute to the ATP site; these read GETGTGKE and ADNGTLFLDE. A DNA-binding region (H-T-H motif) is located at residues 479–498; it reads WAACARALEMDVANLHRLAK.

It participates in nitrogen metabolism; nitric oxide reduction. Required for the expression of anaerobic nitric oxide (NO) reductase, acts as a transcriptional activator for at least the norVW operon. Activation also requires sigma-54. The sequence is that of Anaerobic nitric oxide reductase transcription regulator NorR from Enterobacter sp. (strain 638).